Consider the following 131-residue polypeptide: Profilin-4 (131 aa).

Belongs to the profilin family. As to quaternary structure, occurs in many kinds of cells as a complex with monomeric actin in a 1:1 ratio.

It localises to the cytoplasm. It is found in the cytoskeleton. Its function is as follows. Binds to actin and affects the structure of the cytoskeleton. At high concentrations, profilin prevents the polymerization of actin, whereas it enhances it at low concentrations. By binding to PIP2, it inhibits the formation of IP3 and DG. This chain is Profilin-4, found in Hevea brasiliensis (Para rubber tree).